Here is a 160-residue protein sequence, read N- to C-terminus: Cyanate hydratase (160 aa).

Active-site residues include Arg-100, Glu-103, and Ser-126.

The protein belongs to the cyanase family.

The enzyme catalyses cyanate + hydrogencarbonate + 3 H(+) = NH4(+) + 2 CO2. Functionally, catalyzes the reaction of cyanate with bicarbonate to produce ammonia and carbon dioxide. The polypeptide is Cyanate hydratase (Arthroderma otae (strain ATCC MYA-4605 / CBS 113480) (Microsporum canis)).